The primary structure comprises 258 residues: 5'-nucleotidase SurE (258 aa).

Positions 16, 17, 47, and 99 each coordinate a divalent metal cation.

It belongs to the SurE nucleotidase family. A divalent metal cation is required as a cofactor.

Its subcellular location is the cytoplasm. It carries out the reaction a ribonucleoside 5'-phosphate + H2O = a ribonucleoside + phosphate. In terms of biological role, nucleotidase that shows phosphatase activity on nucleoside 5'-monophosphates. The protein is 5'-nucleotidase SurE of Coxiella burnetii (strain Dugway 5J108-111).